A 108-amino-acid chain; its full sequence is UPF0145 protein Tery_3795 (108 aa).

Belongs to the UPF0145 family.

The sequence is that of UPF0145 protein Tery_3795 from Trichodesmium erythraeum (strain IMS101).